Consider the following 116-residue polypeptide: Large ribosomal subunit protein uL22c (116 aa).

Belongs to the universal ribosomal protein uL22 family. In terms of assembly, part of the 50S ribosomal subunit.

The protein resides in the plastid. It is found in the chloroplast. This protein binds specifically to 23S rRNA. In terms of biological role, the globular domain of the protein is located near the polypeptide exit tunnel on the outside of the subunit, while an extended beta-hairpin is found that lines the wall of the exit tunnel in the center of the 70S ribosome. In Euglena gracilis, this protein is Large ribosomal subunit protein uL22c (rpl22).